Reading from the N-terminus, the 232-residue chain is NKG2-D type II integral membrane protein (232 aa).

At 1–66 the chain is on the cytoplasmic side; sequence MALIRDRKSH…IEKLKISPMF (66 aa). Residues 67-89 traverse the membrane as a helical; Signal-anchor for type II membrane protein segment; that stretch reads VVRVLAIALAIRFTLNTLMWLAI. The Extracellular segment spans residues 90-232; it reads FKETFQPVLC…NTYICMKRAV (143 aa). 2 cysteine pairs are disulfide-bonded: cysteine 112–cysteine 121 and cysteine 115–cysteine 126. One can recognise a C-type lectin domain in the interval 122–228; it reads HRNNCYQFFN…CANLNTYICM (107 aa). N-linked (GlcNAc...) asparagine glycosylation is found at asparagine 137, asparagine 147, and asparagine 179. 2 cysteine pairs are disulfide-bonded: cysteine 143–cysteine 227 and cysteine 205–cysteine 219.

In terms of assembly, homodimer; disulfide-linked. Heterohexamer composed of two subunits of KLRK1 and four subunits of HCST/DAP10. Isoform 1 (via transmembrane domain) interacts with HCST/DAP10; the interaction is required for KLRK1 cell surface expression on activated CD8(+) T-cells, but is dispensable on activated TYROBP-expressing NK cells. Isoform 2 (via transmembrane domain) interacts with HCST/DAP10 (via transmembrane domain); the interaction is required for KLRK1 NK cell surface expression and induces NK cell-mediated cytotoxicity. Isoform 2 (via transmembrane domain) interacts with TYROBP (via transmembrane domain); the interaction is required for KLRK1 NK cell surface expression and induce NK cell-mediated cytotoxicity and cytokine secretion. Isoform 1 does not interact with TYROBP. Interacts with CEACAM1; recruits PTPN6 that dephosphorylates VAV1. As to expression, expressed in natural killer (NK) cells, activated CD8(+) alpha-beta and gamma-delta T-cells and natural killer T (NKT) cells (at protein level). May be expressed on dendritic cell (DC). Isoform 1 is strongly expressed in natural killer (NK) cells. Isoform 2 is weakly expressed in natural killer (NK) cells. Isoform 1 and isoform 2 are expressed in stimulated, but not in unstimulated, CD8(+) T-cells and macrophages.

It is found in the cell membrane. Its function is as follows. Functions as an activating and costimulatory receptor involved in immunosurveillance upon binding to various cellular stress-inducible ligands displayed at the surface of autologous tumor cells and virus-infected cells. Provides both stimulatory and costimulatory innate immune responses on activated killer (NK) cells, leading to cytotoxic activity. Acts as a costimulatory receptor for T-cell receptor (TCR) in CD8(+) T-cell-mediated adaptive immune responses by amplifying T-cell activation. Stimulates perforin-mediated elimination of ligand-expressing tumor cells. Signaling involves calcium influx, culminating in the expression of TNF-alpha. Participates in NK cell-mediated bone marrow graft rejection. May play a regulatory role in differentiation and survival of NK cells. Binds to ligands belonging to various subfamilies of MHC class I-related glycoproteins including RAET1A, RAET1B, RAET1C, RAET1D, RAET1E, H60 and MULT1. The chain is NKG2-D type II integral membrane protein (Klrk1) from Mus musculus (Mouse).